The primary structure comprises 421 residues: 4-hydroxy-3-methylbut-2-en-1-yl diphosphate synthase (flavodoxin) (421 aa).

Positions 311, 314, 357, and 364 each coordinate [4Fe-4S] cluster.

This sequence belongs to the IspG family. [4Fe-4S] cluster serves as cofactor.

The catalysed reaction is (2E)-4-hydroxy-3-methylbut-2-enyl diphosphate + oxidized [flavodoxin] + H2O + 2 H(+) = 2-C-methyl-D-erythritol 2,4-cyclic diphosphate + reduced [flavodoxin]. Its pathway is isoprenoid biosynthesis; isopentenyl diphosphate biosynthesis via DXP pathway; isopentenyl diphosphate from 1-deoxy-D-xylulose 5-phosphate: step 5/6. In terms of biological role, converts 2C-methyl-D-erythritol 2,4-cyclodiphosphate (ME-2,4cPP) into 1-hydroxy-2-methyl-2-(E)-butenyl 4-diphosphate. This chain is 4-hydroxy-3-methylbut-2-en-1-yl diphosphate synthase (flavodoxin), found in Xanthomonas oryzae pv. oryzae (strain KACC10331 / KXO85).